Consider the following 145-residue polypeptide: MRALIQRVSEASVTVEGELLGEIGPGLLILVCAMQGDGEDQASALAARIAKLRIFKDEAGKMNRSVRDTGGAALVVSQFTLAADTSRGNRPGFSAAAPPADGERLYRHFAAEIAACGIPTATGRFGADMKVRLLNDGPVTIWMES.

The Gly-cisPro motif, important for rejection of L-amino acids signature appears at 137-138 (GP).

The protein belongs to the DTD family. As to quaternary structure, homodimer.

The protein resides in the cytoplasm. It catalyses the reaction glycyl-tRNA(Ala) + H2O = tRNA(Ala) + glycine + H(+). The catalysed reaction is a D-aminoacyl-tRNA + H2O = a tRNA + a D-alpha-amino acid + H(+). Its function is as follows. An aminoacyl-tRNA editing enzyme that deacylates mischarged D-aminoacyl-tRNAs. Also deacylates mischarged glycyl-tRNA(Ala), protecting cells against glycine mischarging by AlaRS. Acts via tRNA-based rather than protein-based catalysis; rejects L-amino acids rather than detecting D-amino acids in the active site. By recycling D-aminoacyl-tRNA to D-amino acids and free tRNA molecules, this enzyme counteracts the toxicity associated with the formation of D-aminoacyl-tRNA entities in vivo and helps enforce protein L-homochirality. The protein is D-aminoacyl-tRNA deacylase of Cereibacter sphaeroides (strain ATCC 17029 / ATH 2.4.9) (Rhodobacter sphaeroides).